Consider the following 68-residue polypeptide: Putative membrane protein insertion efficiency factor (68 aa).

This sequence belongs to the UPF0161 family.

The protein localises to the cell inner membrane. In terms of biological role, could be involved in insertion of integral membrane proteins into the membrane. The protein is Putative membrane protein insertion efficiency factor of Persephonella marina (strain DSM 14350 / EX-H1).